The following is a 216-amino-acid chain: uncharacterized protein (216 aa).

Positions 18 to 47 (PPDSPIEDRCGSCNICVDSCPTGALVQGGQ) constitute a 4Fe-4S ferredoxin-type domain. 7 residues coordinate [4Fe-4S] cluster: cysteine 27, cysteine 30, cysteine 33, cysteine 37, cysteine 79, cysteine 82, and cysteine 86.

This is an uncharacterized protein from Geobacillus stearothermophilus (Bacillus stearothermophilus).